The primary structure comprises 488 residues: Eukaryotic translation initiation factor 3 subunit L (488 aa).

Disordered regions lie at residues 1 to 34 (MSLPQHQNRDAARRAPDDDDDAEEETMANDYREQ) and 427 to 449 (SEGGLLERRGDPQQRSRLRHGKE). The segment covering 7-16 (QNRDAARRAP) has biased composition (basic and acidic residues). Over residues 17–27 (DDDDDAEEETM) the composition is skewed to acidic residues. Residues 256–450 (DAIRMFSHIL…RSRLRHGKEI (195 aa)) enclose the PCI domain. The span at 431 to 440 (LLERRGDPQQ) shows a compositional bias: basic and acidic residues.

It belongs to the eIF-3 subunit L family. Component of the eukaryotic translation initiation factor 3 (eIF-3) complex.

It is found in the cytoplasm. In terms of biological role, component of the eukaryotic translation initiation factor 3 (eIF-3) complex, which is involved in protein synthesis of a specialized repertoire of mRNAs and, together with other initiation factors, stimulates binding of mRNA and methionyl-tRNAi to the 40S ribosome. The eIF-3 complex specifically targets and initiates translation of a subset of mRNAs involved in cell proliferation. The polypeptide is Eukaryotic translation initiation factor 3 subunit L (Phaeosphaeria nodorum (strain SN15 / ATCC MYA-4574 / FGSC 10173) (Glume blotch fungus)).